The chain runs to 506 residues: Maturase K (506 aa).

The protein belongs to the intron maturase 2 family. MatK subfamily.

Its subcellular location is the plastid. The protein resides in the chloroplast. Usually encoded in the trnK tRNA gene intron. Probably assists in splicing its own and other chloroplast group II introns. The polypeptide is Maturase K (Trifolium wormskioldii (Cows clover)).